A 77-amino-acid chain; its full sequence is UPF0401 protein ECP_3010 (77 aa).

This sequence belongs to the UPF0401 family.

The polypeptide is UPF0401 protein ECP_3010 (Escherichia coli O6:K15:H31 (strain 536 / UPEC)).